A 79-amino-acid chain; its full sequence is Small ribosomal subunit protein uS17 (79 aa).

Belongs to the universal ribosomal protein uS17 family. In terms of assembly, part of the 30S ribosomal subunit.

Its function is as follows. One of the primary rRNA binding proteins, it binds specifically to the 5'-end of 16S ribosomal RNA. The polypeptide is Small ribosomal subunit protein uS17 (Rhodospirillum rubrum (strain ATCC 11170 / ATH 1.1.1 / DSM 467 / LMG 4362 / NCIMB 8255 / S1)).